We begin with the raw amino-acid sequence, 225 residues long: Glutathione S-transferase Mu 3 (225 aa).

A GST N-terminal domain is found at 5 to 92 (SSMVLGYWDI…YIARKHNMCG (88 aa)). Glutathione is bound by residues 11 to 12 (YW), 50 to 54 (WLDVK), and 63 to 64 (NL). A Glycyl lysine isopeptide (Lys-Gly) (interchain with G-Cter in SUMO2) cross-link involves residue Lys54. A Glycyl lysine isopeptide (Lys-Gly) (interchain with G-Cter in SUMO2) cross-link involves residue Lys73. A glutathione-binding site is contributed by 76 to 77 (QS). The 119-residue stretch at 94 to 212 (TEEEKIRVDI…QSDQFCKMPI (119 aa)) folds into the GST C-terminal domain. Position 120 (Tyr120) interacts with substrate.

This sequence belongs to the GST superfamily. Mu family. In terms of assembly, homodimer. Post-translationally, the N-terminus is blocked. Testis and brain.

The protein localises to the cytoplasm. The enzyme catalyses RX + glutathione = an S-substituted glutathione + a halide anion + H(+). In terms of biological role, conjugation of reduced glutathione to a wide number of exogenous and endogenous hydrophobic electrophiles. May govern uptake and detoxification of both endogenous compounds and xenobiotics at the testis and brain blood barriers. This Homo sapiens (Human) protein is Glutathione S-transferase Mu 3 (GSTM3).